We begin with the raw amino-acid sequence, 203 residues long: Ras-like protein family member 10A (203 aa).

Positions 1–203 (MGGSLRVAVL…ALHPARCSLM (203 aa)) are small GTPase-like. 11–18 (GAPGVGKT) is a binding site for GTP. Positions 33 to 42 (HRPTDGPRLY) match the Effector region motif. GTP contacts are provided by residues 59–62 (DGDV) and 129–132 (NKRD). A Cysteine methyl ester modification is found at Cys200. Cys200 carries S-farnesyl cysteine lipidation. Residues 201–203 (SLM) constitute a propeptide, removed in mature form.

It belongs to the small GTPase superfamily. Ras family. Isoprenylation is essential for nucleolar localization, and the proliferation-inhibiting activity of RASL10A. As to expression, expression appears to be strictly limited to the central nervous system.

It is found in the cell membrane. It localises to the nucleus. The protein resides in the nucleolus. It catalyses the reaction GTP + H2O = GDP + phosphate + H(+). Functionally, potent inhibitor of cellular proliferation. In Homo sapiens (Human), this protein is Ras-like protein family member 10A (RASL10A).